Reading from the N-terminus, the 179-residue chain is Small ribosomal subunit protein uS5 (179 aa).

The 64-residue stretch at 22-85 folds into the S5 DRBM domain; sequence MIEKLVAVNR…EYARKTMANV (64 aa).

It belongs to the universal ribosomal protein uS5 family. As to quaternary structure, part of the 30S ribosomal subunit. Contacts proteins S4 and S8.

Functionally, with S4 and S12 plays an important role in translational accuracy. In terms of biological role, located at the back of the 30S subunit body where it stabilizes the conformation of the head with respect to the body. The sequence is that of Small ribosomal subunit protein uS5 from Xylella fastidiosa (strain 9a5c).